The sequence spans 434 residues: KH domain-containing protein 3 (434 aa).

The segment at 1–39 is involved in RNA binding; it reads MATLKTFRTLVQLKHKLGKAYEIVGEPRLPKWFHVEYLE. The region spanning 40 to 118 is the KH; atypical domain; sequence DPKKMYVEPT…CRMKLMEKEA (79 aa). Phosphothreonine is present on residues Thr-267 and Thr-279. Residues 334–434 are required for interaction with NUMA1 and regulation of apoptosis in response to DNA damage; the sequence is VREAATQQTP…RAVWEPFVML (101 aa).

It belongs to the KHDC1 family. In terms of assembly, component of the subcortical maternal complex (SCMC), at least composed of NLRP5, KHDC3, OOEP, and TLE6. Within the complex, interacts with NLRP5, KHDC3 and TLE6. The SCMC may facilitate translocation of its components between the nuclear and cytoplasmic compartments. Forms a scaffold complex with OOEP/FLOPED, and interacts with BLM and TRIM25 at DNA replication forks. Interacts with PARP1; the interaction is increased following the formation of DNA double-strand breaks. Interacts (via C-terminus) with NUMA1.

Its subcellular location is the cytoplasm. It is found in the cell cortex. The protein resides in the nucleus. It localises to the mitochondrion. The protein localises to the cytoskeleton. Its subcellular location is the microtubule organizing center. It is found in the centrosome. The protein resides in the chromosome. Its function is as follows. Component of the subcortical maternal complex (SCMC), a multiprotein complex that plays a key role in early embryonic development. The SCMC complex is a structural constituent of cytoplasmic lattices, which consist in fibrous structures found in the cytoplasm of oocytes and preimplantation embryos. They are required to store maternal proteins critical for embryonic development, such as proteins that control epigenetic reprogramming of the preimplantation embryo, and prevent their degradation or activation. KHDC3 ensures proper spindle assembly by regulating the localization of AURKA via RHOA signaling and of PLK1 via a RHOA-independent process. Required for the localization of MAD2L1 to kinetochores to enable spindle assembly checkpoint function. As part of the OOEP-KHDC3 scaffold, recruits BLM and TRIM25 to DNA replication forks, thereby promoting the ubiquitination of BLM by TRIM25, enhancing BLM retainment at replication forks and therefore promoting stalled replication fork restart. Regulates homologous recombination-mediated DNA repair via recruitment of RAD51 to sites of DNA double-strand breaks, and sustainment of PARP1 activity, which in turn modulates downstream ATM or ATR activation. Activation of ATM or ATR in response to DNA double-strand breaks may be cell-type specific. Its role in DNA double-strand break repair is independent of its role in restarting stalled replication forks. Promotes neural stem cell neurogenesis and neuronal differentiation in the hippocampus. May regulate normal development of learning, memory and anxiety. Capable of binding RNA. This Rattus norvegicus (Rat) protein is KH domain-containing protein 3.